Here is a 273-residue protein sequence, read N- to C-terminus: MSATELRLAVVGAGGRMGRQLIQAINQQQGVVLGAAFERTNSSLIGADAGELAGIGHIGITVTDNLLAQVGQFDILIDFTRPEGTLSHLAFCVEHHKGMIIGTTGFDEEGKKAINCAAQTIPIVFAANFSVGVNLVLKLLEKAAKVMGSYSDIEIVEAHHRHKVDAPSGTALAMGESIAETLGRDLKDCAVYQRVGHTGERDPRSIGFATIRAGDIVGEHTAIFADIGERVEISHKASSRMTFANGAVKSAIWLSEKKSGLYNMKDVLSLEEL.

Residues glycine 12–methionine 17 and glutamate 38 contribute to the NAD(+) site. Arginine 39 contributes to the NADP(+) binding site. Residues glycine 102–threonine 104 and alanine 126–phenylalanine 129 each bind NAD(+). Catalysis depends on histidine 159, which acts as the Proton donor/acceptor. Residue histidine 160 participates in (S)-2,3,4,5-tetrahydrodipicolinate binding. Catalysis depends on lysine 163, which acts as the Proton donor. Glycine 169–threonine 170 contacts (S)-2,3,4,5-tetrahydrodipicolinate.

The protein belongs to the DapB family. As to quaternary structure, homotetramer.

The protein localises to the cytoplasm. It catalyses the reaction (S)-2,3,4,5-tetrahydrodipicolinate + NAD(+) + H2O = (2S,4S)-4-hydroxy-2,3,4,5-tetrahydrodipicolinate + NADH + H(+). It carries out the reaction (S)-2,3,4,5-tetrahydrodipicolinate + NADP(+) + H2O = (2S,4S)-4-hydroxy-2,3,4,5-tetrahydrodipicolinate + NADPH + H(+). Its pathway is amino-acid biosynthesis; L-lysine biosynthesis via DAP pathway; (S)-tetrahydrodipicolinate from L-aspartate: step 4/4. Catalyzes the conversion of 4-hydroxy-tetrahydrodipicolinate (HTPA) to tetrahydrodipicolinate. The chain is 4-hydroxy-tetrahydrodipicolinate reductase from Proteus mirabilis (strain HI4320).